The chain runs to 265 residues: NAD kinase (265 aa).

D45 (proton acceptor) is an active-site residue. Residues 45-46, 122-123, R148, D150, 161-166, and A185 contribute to the NAD(+) site; these read DG, NE, and TAYSKS.

The protein belongs to the NAD kinase family. The cofactor is a divalent metal cation.

It localises to the cytoplasm. It catalyses the reaction NAD(+) + ATP = ADP + NADP(+) + H(+). Functionally, involved in the regulation of the intracellular balance of NAD and NADP, and is a key enzyme in the biosynthesis of NADP. Catalyzes specifically the phosphorylation on 2'-hydroxyl of the adenosine moiety of NAD to yield NADP. This Lactobacillus delbrueckii subsp. bulgaricus (strain ATCC 11842 / DSM 20081 / BCRC 10696 / JCM 1002 / NBRC 13953 / NCIMB 11778 / NCTC 12712 / WDCM 00102 / Lb 14) protein is NAD kinase.